Consider the following 221-residue polypeptide: Ribosomal RNA large subunit methyltransferase E (221 aa).

S-adenosyl-L-methionine-binding residues include Gly-60, Trp-62, Asp-89, Asp-105, and Asp-134. Lys-174 functions as the Proton acceptor in the catalytic mechanism.

This sequence belongs to the class I-like SAM-binding methyltransferase superfamily. RNA methyltransferase RlmE family.

The protein resides in the cytoplasm. It catalyses the reaction uridine(2552) in 23S rRNA + S-adenosyl-L-methionine = 2'-O-methyluridine(2552) in 23S rRNA + S-adenosyl-L-homocysteine + H(+). Functionally, specifically methylates the uridine in position 2552 of 23S rRNA at the 2'-O position of the ribose in the fully assembled 50S ribosomal subunit. This is Ribosomal RNA large subunit methyltransferase E from Cupriavidus necator (strain ATCC 17699 / DSM 428 / KCTC 22496 / NCIMB 10442 / H16 / Stanier 337) (Ralstonia eutropha).